The chain runs to 340 residues: Ferredoxin--NADP reductase (340 aa).

Residues D33, Q41, Y46, A86, F120, D286, and T327 each contribute to the FAD site.

It belongs to the ferredoxin--NADP reductase type 2 family. Homodimer. FAD is required as a cofactor.

The enzyme catalyses 2 reduced [2Fe-2S]-[ferredoxin] + NADP(+) + H(+) = 2 oxidized [2Fe-2S]-[ferredoxin] + NADPH. The sequence is that of Ferredoxin--NADP reductase from Rickettsia rickettsii (strain Iowa).